A 290-amino-acid chain; its full sequence is Nucleotide-binding protein Bpet0443 (290 aa).

9 to 16 (GISGSGKS) lines the ATP pocket. 58–61 (DVRS) provides a ligand contact to GTP.

This sequence belongs to the RapZ-like family.

Functionally, displays ATPase and GTPase activities. In Bordetella petrii (strain ATCC BAA-461 / DSM 12804 / CCUG 43448), this protein is Nucleotide-binding protein Bpet0443.